A 94-amino-acid chain; its full sequence is Large ribosomal subunit protein bL25 (94 aa).

Belongs to the bacterial ribosomal protein bL25 family. In terms of assembly, part of the 50S ribosomal subunit; part of the 5S rRNA/L5/L18/L25 subcomplex. Contacts the 5S rRNA. Binds to the 5S rRNA independently of L5 and L18.

Functionally, this is one of the proteins that binds to the 5S RNA in the ribosome where it forms part of the central protuberance. In Citrobacter koseri (strain ATCC BAA-895 / CDC 4225-83 / SGSC4696), this protein is Large ribosomal subunit protein bL25.